We begin with the raw amino-acid sequence, 243 residues long: MAQNDTVKLIGCSDDPFSIRPRVALHLKSIKYEYLEEPDDDLGEKSQLLLKSNPIHKKTPVLIHGDLAICESLNIVQYLDEAWPSDPSILPSNAYDRASARFWAQYIDDKCFEAANALTGANNDEERIAATGKLTECLAILEETFQKSSKGLGFFGGETIGYLDIACAALLGPISVIEMFSADKFVREETTPGLIQWAVRFRAHEAVRPYMPTVEEVTELVKQRIEEGFKRNFKSNVSTSEYE.

The GST N-terminal domain occupies 5 to 87 (DTVKLIGCSD…YLDEAWPSDP (83 aa)). Glutathione contacts are provided by residues 15–16 (DP), 44–45 (EK), 58–59 (KT), and 71–72 (ES). The 128-residue stretch at 93-220 (NAYDRASARF…MPTVEEVTEL (128 aa)) folds into the GST C-terminal domain. A Phosphothreonine modification is found at T159.

Belongs to the GST superfamily. Tau family.

The protein resides in the cytoplasm. It localises to the cytosol. The enzyme catalyses RX + glutathione = an S-substituted glutathione + a halide anion + H(+). May be involved in the conjugation of reduced glutathione to a wide number of exogenous and endogenous hydrophobic electrophiles and have a detoxification role against certain herbicides. In Arabidopsis thaliana (Mouse-ear cress), this protein is Glutathione S-transferase U14 (GSTU14).